Here is an 85-residue protein sequence, read N- to C-terminus: MAHKKAAGSSRNGRDSNPKMLGVKIFGGQAIVAGNIIVRQRGTEFHAGEGVGMGRDHTLFALNDGVVKFATKGKFNRRYVMVESA.

The segment at 1 to 20 (MAHKKAAGSSRNGRDSNPKM) is disordered.

It belongs to the bacterial ribosomal protein bL27 family.

This Psychrobacter arcticus (strain DSM 17307 / VKM B-2377 / 273-4) protein is Large ribosomal subunit protein bL27.